The primary structure comprises 397 residues: Plasma membrane iron permease (397 aa).

Transmembrane regions (helical) follow at residues 61-81, 92-112, 177-197, and 292-312; these read FTAL…FYAL, IWEG…GFAM, AFPL…YFIY, and GSIL…FLMW. Phosphoserine occurs at positions 337 and 338. Residues 337–346 are compositionally biased toward polar residues; the sequence is SSHTPVQSSS. The tract at residues 337-364 is disordered; the sequence is SSHTPVQSSSSEDEFKINSPTDDKGDKA. Residue T340 is modified to Phosphothreonine. S346, S347, and S355 each carry phosphoserine. Positions 349-364 are enriched in basic and acidic residues; that stretch reads DEFKINSPTDDKGDKA. T357 carries the phosphothreonine modification. S374, S375, and S376 each carry phosphoserine.

Belongs to the oxidase-dependent Fe transporter (OFeT) (TC 9.A.10.1) family.

Its subcellular location is the membrane. In terms of biological role, permease for high affinity iron uptake. This chain is Plasma membrane iron permease (fip1), found in Schizosaccharomyces pombe (strain 972 / ATCC 24843) (Fission yeast).